A 218-amino-acid polypeptide reads, in one-letter code: 3,4-dihydroxy-2-butanone 4-phosphate synthase (218 aa).

D-ribulose 5-phosphate-binding positions include 38-39, D43, 151-155, and E175; these read RE and RRGHT. E39 is a binding site for Mg(2+). Residue H154 participates in Mg(2+) binding.

Belongs to the DHBP synthase family. As to quaternary structure, homodimer. Mg(2+) serves as cofactor. The cofactor is Mn(2+).

It catalyses the reaction D-ribulose 5-phosphate = (2S)-2-hydroxy-3-oxobutyl phosphate + formate + H(+). It functions in the pathway cofactor biosynthesis; riboflavin biosynthesis; 2-hydroxy-3-oxobutyl phosphate from D-ribulose 5-phosphate: step 1/1. Catalyzes the conversion of D-ribulose 5-phosphate to formate and 3,4-dihydroxy-2-butanone 4-phosphate. The protein is 3,4-dihydroxy-2-butanone 4-phosphate synthase of Shewanella frigidimarina (strain NCIMB 400).